We begin with the raw amino-acid sequence, 159 residues long: Ribosomal RNA large subunit methyltransferase H (159 aa).

S-adenosyl-L-methionine is bound by residues Leu76, Gly108, and 127–132 (FGRLTL).

It belongs to the RNA methyltransferase RlmH family. In terms of assembly, homodimer.

It is found in the cytoplasm. The enzyme catalyses pseudouridine(1915) in 23S rRNA + S-adenosyl-L-methionine = N(3)-methylpseudouridine(1915) in 23S rRNA + S-adenosyl-L-homocysteine + H(+). Functionally, specifically methylates the pseudouridine at position 1915 (m3Psi1915) in 23S rRNA. The sequence is that of Ribosomal RNA large subunit methyltransferase H from Listeria monocytogenes serotype 4a (strain HCC23).